Reading from the N-terminus, the 95-residue chain is Co-chaperonin GroES (95 aa).

It belongs to the GroES chaperonin family. Heptamer of 7 subunits arranged in a ring. Interacts with the chaperonin GroEL.

It is found in the cytoplasm. In terms of biological role, together with the chaperonin GroEL, plays an essential role in assisting protein folding. The GroEL-GroES system forms a nano-cage that allows encapsulation of the non-native substrate proteins and provides a physical environment optimized to promote and accelerate protein folding. GroES binds to the apical surface of the GroEL ring, thereby capping the opening of the GroEL channel. The chain is Co-chaperonin GroES from Francisella philomiragia subsp. philomiragia (strain ATCC 25017 / CCUG 19701 / FSC 153 / O#319-036).